The following is an 833-amino-acid chain: Heat shock transcription factor (833 aa).

Position 1 is an N-acetylmethionine (Met1). Residues 1-16 are compositionally biased toward polar residues; the sequence is MNNAANTGTTNESNVS. 2 disordered regions span residues 1–31 and 62–92; these read MNNA…NDDD and NPSL…STHL. Over residues 69 to 80 the composition is skewed to low complexity; it reads SAASPVPSSSFF. Thr97 is modified (phosphothreonine). The span at 150–161 shows a compositional bias: polar residues; the sequence is PSSGTTNAQPRQ. Disordered stretches follow at residues 150 to 170 and 277 to 309; these read PSSG…QSHK and GSSN…NNSN. Residues 170–259 mediate DNA binding; it reads KSRPAFVNKL…SDDKWQFENE (90 aa). Residues 260–280 are flexible linker; that stretch reads NFIRGREDLLEKIIRQKGSSN. The span at 277 to 296 shows a compositional bias: low complexity; the sequence is GSSNNHNSPSGNGNPANGSN. The involved in trimerization stretch occupies residues 350–403; sequence ELEQIKYNQIAISKDLLRINKDNELLWQENMMARERHRTQQQALEKMFRFLTSI. Residues 447–457 show a composition bias toward basic and acidic residues; sequence SNDSFINDDRN. The interval 447–493 is disordered; sequence SNDSFINDDRNSFTNATTNARNNMSPNNDDNSIDTASTNTTNRKKNI. Phosphoserine is present on residues Ser450, Ser458, Ser471, Ser478, and Ser528. Residues 458–487 are compositionally biased toward polar residues; sequence SFTNATTNARNNMSPNNDDNSIDTASTNTT. Over residues 542 to 554 the composition is skewed to polar residues; the sequence is RANSSTSSENPSL. 3 disordered regions span residues 542-626, 657-765, and 778-799; these read RANS…HNES, GYPN…RVSP, and SDNL…APEN. Acidic residues predominate over residues 571 to 580; sequence PFDDEEEEET. Over residues 588–600 the composition is skewed to polar residues; that stretch reads RDPNNQTSENTFD. The span at 610–626 shows a compositional bias: basic and acidic residues; it reads DDLKKDSHTNDNKHNES. The segment covering 660 to 675 has biased composition (low complexity); sequence NKSFNNKTSSTNTNSN. The segment covering 676–687 has biased composition (polar residues); the sequence is MESAVNVNSPGF. Positions 697–713 are enriched in low complexity; sequence SNSPNSVHSVPSNGSGS. Composition is skewed to polar residues over residues 727 to 739, 752 to 763, and 778 to 794; these read ASTS…NGSG, NDNNTSEGSTRV, and SDNL…TQAD.

The protein belongs to the HSF family. Homotrimer. Homotrimerization increases the affinity of HSF1 to DNA. In terms of processing, exhibits temperature-dependent phosphorylation that activates the transcriptional capacity.

The protein resides in the nucleus. DNA-binding transcription factor that specifically binds heat shock promoter elements (HSE) and activates transcription. This chain is Heat shock transcription factor, found in Saccharomyces cerevisiae (strain ATCC 204508 / S288c) (Baker's yeast).